The primary structure comprises 235 residues: Demethylmenaquinone methyltransferase (235 aa).

Residues T58, D79, and 106–107 (NA) each bind S-adenosyl-L-methionine.

It belongs to the class I-like SAM-binding methyltransferase superfamily. MenG/UbiE family.

The enzyme catalyses a 2-demethylmenaquinol + S-adenosyl-L-methionine = a menaquinol + S-adenosyl-L-homocysteine + H(+). It functions in the pathway quinol/quinone metabolism; menaquinone biosynthesis; menaquinol from 1,4-dihydroxy-2-naphthoate: step 2/2. In terms of biological role, methyltransferase required for the conversion of demethylmenaquinol (DMKH2) to menaquinol (MKH2). The chain is Demethylmenaquinone methyltransferase from Shouchella clausii (strain KSM-K16) (Alkalihalobacillus clausii).